A 428-amino-acid chain; its full sequence is Homocitrate synthase, cytosolic isozyme (428 aa).

Residues 23-276 (FQLIDSTLRE…KSKYKLHKIR (254 aa)) enclose the Pyruvate carboxyltransferase domain. Arginine 31 provides a ligand contact to 2-oxoglutarate. Glutamate 32 serves as a coordination point for Mg(2+). Histidine 91, arginine 151, and threonine 185 together coordinate 2-oxoglutarate. The Mg(2+) site is built by histidine 212 and histidine 214. Histidine 309 functions as the Proton acceptor in the catalytic mechanism. Serine 385 carries the post-translational modification Phosphoserine. Phosphothreonine is present on threonine 396. The interval 399–428 (VLSAKKNKKNDSDVPELATIPAAKRTKPSA) is disordered. Phosphoserine occurs at positions 401 and 410.

This sequence belongs to the alpha-IPM synthase/homocitrate synthase family. Homocitrate synthase LYS20/LYS21 subfamily. Mg(2+) is required as a cofactor. Requires Mn(2+) as cofactor.

The protein localises to the cytoplasm. The catalysed reaction is acetyl-CoA + 2-oxoglutarate + H2O = (2R)-homocitrate + CoA + H(+). The protein operates within amino-acid biosynthesis; L-lysine biosynthesis via AAA pathway; L-alpha-aminoadipate from 2-oxoglutarate: step 1/5. Its function is as follows. Catalyzes the aldol-type condensation of 2-oxoglutarate with acetyl-CoA to yield homocitrate. Carries out the first step of the alpha-aminoadipate (AAA) lysine biosynthesis pathway. The polypeptide is Homocitrate synthase, cytosolic isozyme (LYS20) (Saccharomyces cerevisiae (strain ATCC 204508 / S288c) (Baker's yeast)).